We begin with the raw amino-acid sequence, 413 residues long: Multifunctional CCA protein (413 aa).

ATP contacts are provided by glycine 8 and arginine 11. Residues glycine 8 and arginine 11 each contribute to the CTP site. Aspartate 21 and aspartate 23 together coordinate Mg(2+). ATP-binding residues include arginine 91, arginine 137, and arginine 140. CTP contacts are provided by arginine 91, arginine 137, and arginine 140. Positions 228–329 (TGIHTLMTLS…VKLFDNIDAW (102 aa)) constitute an HD domain.

It belongs to the tRNA nucleotidyltransferase/poly(A) polymerase family. Bacterial CCA-adding enzyme type 1 subfamily. Monomer. Can also form homodimers and oligomers. Mg(2+) serves as cofactor. The cofactor is Ni(2+).

The catalysed reaction is a tRNA precursor + 2 CTP + ATP = a tRNA with a 3' CCA end + 3 diphosphate. It catalyses the reaction a tRNA with a 3' CCA end + 2 CTP + ATP = a tRNA with a 3' CCACCA end + 3 diphosphate. Its function is as follows. Catalyzes the addition and repair of the essential 3'-terminal CCA sequence in tRNAs without using a nucleic acid template. Adds these three nucleotides in the order of C, C, and A to the tRNA nucleotide-73, using CTP and ATP as substrates and producing inorganic pyrophosphate. tRNA 3'-terminal CCA addition is required both for tRNA processing and repair. Also involved in tRNA surveillance by mediating tandem CCA addition to generate a CCACCA at the 3' terminus of unstable tRNAs. While stable tRNAs receive only 3'-terminal CCA, unstable tRNAs are marked with CCACCA and rapidly degraded. This is Multifunctional CCA protein from Enterobacter sp. (strain 638).